We begin with the raw amino-acid sequence, 445 residues long: Inward rectifier potassium channel 4 (445 aa).

The Cytoplasmic segment spans residues 1–55 (MHGHNRNGQAHVPRRKRRNRFVKKNGQCNVYFANLSNKSQRYMADIFTTCVDTRW). Residues 56-80 (RYMLMIFSAAFLVSWLFFGLLFWWI) traverse the membrane as a helical segment. Topologically, residues 81-119 (AFFHGDLEASPSVPAVGGPGGNGGESPNAPKPCIMHVNG) are extracellular. Residues 120–131 (FLGAFLFSVETQ) constitute an intramembrane region (helical; Pore-forming). Residues 132-138 (TTIGYGF) constitute an intramembrane region (pore-forming). Residues 133–138 (TIGYGF) carry the Selectivity filter motif. Over 139 to 147 (RCVTEECPL) the chain is Extracellular. A helical transmembrane segment spans residues 148 to 169 (AVIAVVVQSIVGCVIDSFMIGT). Residues 170–445 (IMAKMARPKK…NISYRRESRI (276 aa)) lie on the Cytoplasmic side of the membrane. The short motif at 443–445 (SRI) is the PDZ-binding element.

Belongs to the inward rectifier-type potassium channel (TC 1.A.2.1) family. KCNJ4 subfamily. In terms of assembly, homomultimeric and heteromultimeric association with KCNJ2 and KCNJ12. Interacts with DLG2 and DLG4. Associates, via its PDZ-recognition domain, with a complex containing LIN7A, LIN7B, LIN7C, DLG1, CASK and APBA1. Interacts with TAX1BP3. TAX1BP3 competes with LIN7 family members for KCNJ4 binding. In terms of tissue distribution, highly expressed in the forebrain, moderately in skeletal muscle. Im olfactory bulb, specifically expressed at the postsynaptic membrane of dendritic spines of granule cells.

It localises to the cell membrane. It is found in the postsynaptic cell membrane. Its subcellular location is the cytoplasmic vesicle membrane. The enzyme catalyses K(+)(in) = K(+)(out). Functionally, inward rectifier potassium channels are characterized by a greater tendency to allow potassium to flow into the cell rather than out of it. Their voltage dependence is regulated by the concentration of extracellular potassium; as external potassium is raised, the voltage range of the channel opening shifts to more positive voltages. The inward rectification is mainly due to the blockage of outward current by internal magnesium. Can be blocked by extracellular barium and cesium. This is Inward rectifier potassium channel 4 (Kcnj4) from Mus musculus (Mouse).